The chain runs to 150 residues: 1,4-dihydroxy-2-naphthoyl-CoA hydrolase (150 aa).

Residue aspartate 19 is part of the active site.

It belongs to the 4-hydroxybenzoyl-CoA thioesterase family. DHNA-CoA hydrolase subfamily.

It catalyses the reaction 1,4-dihydroxy-2-naphthoyl-CoA + H2O = 1,4-dihydroxy-2-naphthoate + CoA + H(+). It functions in the pathway cofactor biosynthesis; phylloquinone biosynthesis. It participates in quinol/quinone metabolism; 1,4-dihydroxy-2-naphthoate biosynthesis; 1,4-dihydroxy-2-naphthoate from chorismate: step 7/7. Catalyzes the hydrolysis of 1,4-dihydroxy-2-naphthoyl-CoA (DHNA-CoA) to 1,4-dihydroxy-2-naphthoate (DHNA), a reaction involved in phylloquinone (vitamin K1) biosynthesis. In Prochlorococcus marinus (strain MIT 9215), this protein is 1,4-dihydroxy-2-naphthoyl-CoA hydrolase.